The following is a 945-amino-acid chain: Netrin receptor UNC5B (945 aa).

Residues 1 to 26 form the signal peptide; sequence MGARSGARGALLLALLLCWDPRLSQA. Residues 27 to 377 are Extracellular-facing; sequence GTDSGSEVLP…LEASGDAALY (351 aa). Residues 48–145 form the Ig-like domain; the sequence is PYFLQEPQDA…AGTTKSRRAY (98 aa). 9 disulfides stabilise this stretch: Cys69–Cys130, Cys81–Cys128, Cys174–Cys225, Cys258–Cys295, Cys262–Cys299, Cys273–Cys285, Cys314–Cys348, Cys318–Cys353, and Cys326–Cys338. Residues 147–242 enclose the Ig-like C2-type domain; it reads RIAYLRKNFD…KRRSTTATVI (96 aa). Residue Asn222 is glycosylated (N-linked (GlcNAc...) asparagine). TSP type-1 domains lie at 246–300 and 302–354; these read NGGW…TICP and DGAW…GLCM. N-linked (GlcNAc...) asparagine glycosylation occurs at Asn347. Residues 378–398 form a helical membrane-spanning segment; the sequence is AGLVVAIFVVVAILMAVGVVV. Topologically, residues 399 to 945 are cytoplasmic; sequence YRRNCRDFDT…LVAVATDGDC (547 aa). Residue Cys403 is the site of S-palmitoyl cysteine attachment. One can recognise a ZU5 domain in the interval 543–686; it reads SSVSGTFGCL…LGTYVFTGES (144 aa). Tyr581 carries the post-translational modification Phosphotyrosine. Residues 689-838 form a UPA domain region; that stretch reads RSAVKRLQLA…AETPAGSLDT (150 aa). Residues 707-725 form an interaction with DCC region; sequence SLEYSLRVYCLEDTPVALK. One can recognise a Death domain in the interval 865–943; it reads KICNSLDAPN…EMLVAVATDG (79 aa).

Belongs to the unc-5 family. Interacts with the cytoplasmic part of DCC. Interacts with GNAI2 via its cytoplasmic part. Interacts (via death domain) with DAPK1 (via death domain). Interacts (via extracellular domain) with FLRT3 (via extracellular domain); the interaction is direct. Interacts (via extracellular domain) with FLRT2 and FLRT3 (via extracellular domain), but has higher affinity for FLRT3. Identified in a complex with FLRT3 and ADGRL3; does not interact with ADGRL3 by itself. Phosphorylated on cytoplasmic tyrosine residues. Post-translationally, proteolytically cleaved by caspases during apoptosis. The cleavage does not take place when the receptor is associated with netrin ligand. Its cleavage by caspases is required to induce apoptosis. In terms of processing, palmitoylation is required for pro-apoptotic activity, but not for location at lipid rafts. As to expression, highly expressed in brain. Also expressed at lower level in developing lung, cartilage, kidney and hematopoietic and immune tissues.

It localises to the cell membrane. The protein resides in the membrane raft. Receptor for netrin required for axon guidance. Mediates axon repulsion of neuronal growth cones in the developing nervous system upon ligand binding. Axon repulsion in growth cones may be caused by its association with DCC that may trigger signaling for repulsion. Functions as a netrin receptor that negatively regulates vascular branching during angiogenesis. Mediates retraction of tip cell filopodia on endothelial growth cones in response to netrin. It also acts as a dependence receptor required for apoptosis induction when not associated with netrin ligand. Mediates apoptosis by activating DAPK1. In the absence of NTN1, activates DAPK1 by reducing its autoinhibitory phosphorylation at Ser-308 thereby increasing its catalytic activity. This chain is Netrin receptor UNC5B (UNC5B), found in Homo sapiens (Human).